The chain runs to 249 residues: uncharacterized protein (249 aa).

The protein resides in the cytoplasm. It is found in the nucleus. Its subcellular location is the nucleolus. This is an uncharacterized protein from Schizosaccharomyces pombe (strain 972 / ATCC 24843) (Fission yeast).